The chain runs to 124 residues: UPF0344 protein BH2983 (124 aa).

The next 4 helical transmembrane spans lie at 15 to 35 (GSWA…KAGK), 40 to 60 (KILH…GAGM), 61 to 81 (LVYW…IVLI), and 102 to 122 (IYWI…YNVI).

The protein belongs to the UPF0344 family.

It localises to the cell membrane. The sequence is that of UPF0344 protein BH2983 from Halalkalibacterium halodurans (strain ATCC BAA-125 / DSM 18197 / FERM 7344 / JCM 9153 / C-125) (Bacillus halodurans).